The primary structure comprises 204 residues: MGEPAFTSFPSLPVLGKLKRNMMPWALQKKREIHMAKAHRRRAARSALPMRLTSCIFRRPVTRIRSHPDNQVRRRKGDEHLEKPQQLCAYRRLQALQPCSSQGEGSSPLHLESVLSILAPGTAGESLDRAGAERVRSPLEPTPGRFPAVAGGPTPGMGCQLPPPLSGQLVTPADIRRQARRVKKARERLAKALQADRLARRAEM.

Residues 126-137 (SLDRAGAERVRS) are compositionally biased toward basic and acidic residues. A disordered region spans residues 126 to 145 (SLDRAGAERVRSPLEPTPGR).

The protein belongs to the MBD3L family.

In Homo sapiens (Human), this protein is Methyl-CpG-binding domain protein 3-like 2B.